The chain runs to 304 residues: Phosphoribosylaminoimidazole-succinocarboxamide synthase (304 aa).

It belongs to the SAICAR synthetase family.

It catalyses the reaction 5-amino-1-(5-phospho-D-ribosyl)imidazole-4-carboxylate + L-aspartate + ATP = (2S)-2-[5-amino-1-(5-phospho-beta-D-ribosyl)imidazole-4-carboxamido]succinate + ADP + phosphate + 2 H(+). It participates in purine metabolism; IMP biosynthesis via de novo pathway; 5-amino-1-(5-phospho-D-ribosyl)imidazole-4-carboxamide from 5-amino-1-(5-phospho-D-ribosyl)imidazole-4-carboxylate: step 1/2. The protein is Phosphoribosylaminoimidazole-succinocarboxamide synthase of Corynebacterium efficiens (strain DSM 44549 / YS-314 / AJ 12310 / JCM 11189 / NBRC 100395).